A 213-amino-acid chain; its full sequence is Orotate phosphoribosyltransferase (213 aa).

Lysine 26 is a binding site for 5-phospho-alpha-D-ribose 1-diphosphate. Residue 34–35 coordinates orotate; it reads FF. 5-phospho-alpha-D-ribose 1-diphosphate contacts are provided by residues 72-73, arginine 99, lysine 100, lysine 103, histidine 105, and 124-132; these read YK and DDVITAGTA. Positions 128 and 156 each coordinate orotate.

Belongs to the purine/pyrimidine phosphoribosyltransferase family. PyrE subfamily. In terms of assembly, homodimer. Mg(2+) is required as a cofactor.

The enzyme catalyses orotidine 5'-phosphate + diphosphate = orotate + 5-phospho-alpha-D-ribose 1-diphosphate. It functions in the pathway pyrimidine metabolism; UMP biosynthesis via de novo pathway; UMP from orotate: step 1/2. Catalyzes the transfer of a ribosyl phosphate group from 5-phosphoribose 1-diphosphate to orotate, leading to the formation of orotidine monophosphate (OMP). The protein is Orotate phosphoribosyltransferase of Enterobacter sp. (strain 638).